The following is a 583-amino-acid chain: Phosphoglucomutase, cytoplasmic (583 aa).

The tract at residues 1–20 is disordered; that stretch reads MATFKVSRVETKPYDGQKPG. Residues arginine 25 and serine 124 each contribute to the alpha-D-glucose 1,6-bisphosphate site. The Phosphoserine intermediate role is filled by serine 124. Positions 124, 300, 302, and 304 each coordinate Mg(2+). Serine 124 carries the post-translational modification Phosphoserine. Aspartate 304, arginine 305, threonine 368, glutamate 387, serine 389, and lysine 400 together coordinate alpha-D-glucose 1,6-bisphosphate.

This sequence belongs to the phosphohexose mutase family. Monomer. Mg(2+) serves as cofactor.

It localises to the cytoplasm. It catalyses the reaction alpha-D-glucose 1-phosphate = alpha-D-glucose 6-phosphate. The enzyme catalyses O-phospho-L-seryl-[protein] + alpha-D-glucose 1-phosphate = alpha-D-glucose 1,6-bisphosphate + L-seryl-[protein]. It carries out the reaction alpha-D-glucose 1,6-bisphosphate + L-seryl-[protein] = O-phospho-L-seryl-[protein] + alpha-D-glucose 6-phosphate. Its function is as follows. Catalyzes the reversible isomerization of alpha-D-glucose 1-phosphate to alpha-D-glucose 6-phosphate. The mechanism proceeds via the intermediate compound alpha-D-glucose 1,6-bisphosphate. This enzyme participates in both the breakdown and synthesis of glucose. The chain is Phosphoglucomutase, cytoplasmic (PGM1) from Mesembryanthemum crystallinum (Common ice plant).